We begin with the raw amino-acid sequence, 291 residues long: G1/S-specific cyclin-D1 (291 aa).

Residue Thr282 is modified to Phosphothreonine.

The protein belongs to the cyclin family. Cyclin D subfamily. In terms of assembly, interacts with the CDK4 and CDK6 protein kinases to form a serine/threonine kinase holoenzyme complex. The cyclin subunit imparts substrate specificity to the complex. Post-translationally, phosphorylation at Thr-282 by MAP kinases is required for ubiquitination and degradation by the DCX(AMBRA1) complex. In terms of processing, ubiquitinated by the DCX(AMBRA1) complex during the transition from G1 to S cell phase, leading to its degradation. The DCX(AMBRA1) complex represents the major regulator of CCND1 stability during the G1/S transition.

It localises to the nucleus. Its subcellular location is the cytoplasm. Regulatory component of the cyclin D1-CDK4 (DC) complex that phosphorylates and inhibits members of the retinoblastoma (RB) protein family including RB1 and regulates the cell-cycle during G(1)/S transition. Phosphorylation of RB1 allows dissociation of the transcription factor E2F from the RB/E2F complex and the subsequent transcription of E2F target genes which are responsible for the progression through the G(1) phase. Hypophosphorylates RB1 in early G(1) phase. Cyclin D-CDK4 complexes are major integrators of various mitogenenic and antimitogenic signals. In Danio rerio (Zebrafish), this protein is G1/S-specific cyclin-D1 (ccnd1).